The primary structure comprises 521 residues: Bifunctional purine biosynthesis protein PurH (521 aa).

Positions 1–145 constitute an MGS-like domain; it reads MIKQALISVS…KNHRDVTVVV (145 aa).

This sequence belongs to the PurH family.

The catalysed reaction is (6R)-10-formyltetrahydrofolate + 5-amino-1-(5-phospho-beta-D-ribosyl)imidazole-4-carboxamide = 5-formamido-1-(5-phospho-D-ribosyl)imidazole-4-carboxamide + (6S)-5,6,7,8-tetrahydrofolate. The enzyme catalyses IMP + H2O = 5-formamido-1-(5-phospho-D-ribosyl)imidazole-4-carboxamide. Its pathway is purine metabolism; IMP biosynthesis via de novo pathway; 5-formamido-1-(5-phospho-D-ribosyl)imidazole-4-carboxamide from 5-amino-1-(5-phospho-D-ribosyl)imidazole-4-carboxamide (10-formyl THF route): step 1/1. The protein operates within purine metabolism; IMP biosynthesis via de novo pathway; IMP from 5-formamido-1-(5-phospho-D-ribosyl)imidazole-4-carboxamide: step 1/1. This chain is Bifunctional purine biosynthesis protein PurH, found in Paraburkholderia phymatum (strain DSM 17167 / CIP 108236 / LMG 21445 / STM815) (Burkholderia phymatum).